Consider the following 762-residue polypeptide: Endonuclease MutS2 (762 aa).

The segment at 1-22 is disordered; the sequence is MSDAPKRSLNPTLMMNNNNTPP. The segment covering 9–20 has biased composition (low complexity); sequence LNPTLMMNNNNT. 333–340 provides a ligand contact to ATP; that stretch reads GVNAGGKT. In terms of domain architecture, Smr spans 688-762; sequence LDLRGQRSEE…GGSGVKIVKL (75 aa).

It belongs to the DNA mismatch repair MutS family. MutS2 subfamily. In terms of assembly, homodimer. Binds to stalled ribosomes, contacting rRNA.

ATPase activity is stimulated by DNA. Endonuclease that is involved in the suppression of homologous recombination and may thus have a key role in the control of bacterial genetic diversity. Also involved in repairing oxidative DNA damage. Has ATPase activity. Binds DNA. Its function is as follows. Endonuclease that is involved in the suppression of homologous recombination and thus may have a key role in the control of bacterial genetic diversity. In terms of biological role, acts as a ribosome collision sensor, splitting the ribosome into its 2 subunits. Detects stalled/collided 70S ribosomes which it binds and splits by an ATP-hydrolysis driven conformational change. Acts upstream of the ribosome quality control system (RQC), a ribosome-associated complex that mediates the extraction of incompletely synthesized nascent chains from stalled ribosomes and their subsequent degradation. Probably generates substrates for RQC. The polypeptide is Endonuclease MutS2 (Helicobacter pylori (strain ATCC 700392 / 26695) (Campylobacter pylori)).